The sequence spans 433 residues: Pyrimidine-nucleoside phosphorylase (433 aa).

Residue 81–83 (KHS) coordinates phosphate. 2 residues coordinate K(+): Gly88 and Thr90. Phosphate-binding positions include Thr92, 108-110 (KMS), and Thr120. Residues Arg168 and Lys187 each contribute to the substrate site. The K(+) site is built by Leu243, Ala246, and Glu255.

This sequence belongs to the thymidine/pyrimidine-nucleoside phosphorylase family. As to quaternary structure, homodimer. K(+) serves as cofactor.

It catalyses the reaction uridine + phosphate = alpha-D-ribose 1-phosphate + uracil. The enzyme catalyses thymidine + phosphate = 2-deoxy-alpha-D-ribose 1-phosphate + thymine. The catalysed reaction is 2'-deoxyuridine + phosphate = 2-deoxy-alpha-D-ribose 1-phosphate + uracil. Functionally, catalyzes phosphorolysis of the pyrimidine nucleosides uridine, thymidine and 2'-deoxyuridine with the formation of the corresponding pyrimidine base and ribose-1-phosphate. The polypeptide is Pyrimidine-nucleoside phosphorylase (pdp) (Staphylococcus epidermidis (strain ATCC 35984 / DSM 28319 / BCRC 17069 / CCUG 31568 / BM 3577 / RP62A)).